The primary structure comprises 363 residues: UDP-N-acetylglucosamine--N-acetylmuramyl-(pentapeptide) pyrophosphoryl-undecaprenol N-acetylglucosamine transferase (363 aa).

Residues 10 to 12 (TGG), asparagine 124, serine 195, isoleucine 248, and glutamine 293 contribute to the UDP-N-acetyl-alpha-D-glucosamine site.

The protein belongs to the glycosyltransferase 28 family. MurG subfamily.

The protein localises to the cell membrane. The enzyme catalyses Mur2Ac(oyl-L-Ala-gamma-D-Glu-L-Lys-D-Ala-D-Ala)-di-trans,octa-cis-undecaprenyl diphosphate + UDP-N-acetyl-alpha-D-glucosamine = beta-D-GlcNAc-(1-&gt;4)-Mur2Ac(oyl-L-Ala-gamma-D-Glu-L-Lys-D-Ala-D-Ala)-di-trans,octa-cis-undecaprenyl diphosphate + UDP + H(+). Its pathway is cell wall biogenesis; peptidoglycan biosynthesis. Cell wall formation. Catalyzes the transfer of a GlcNAc subunit on undecaprenyl-pyrophosphoryl-MurNAc-pentapeptide (lipid intermediate I) to form undecaprenyl-pyrophosphoryl-MurNAc-(pentapeptide)GlcNAc (lipid intermediate II). The protein is UDP-N-acetylglucosamine--N-acetylmuramyl-(pentapeptide) pyrophosphoryl-undecaprenol N-acetylglucosamine transferase of Lacticaseibacillus casei (strain BL23) (Lactobacillus casei).